The sequence spans 76 residues: Omega-conotoxin-like Ai6.3 (76 aa).

An N-terminal signal peptide occupies residues 1–22 (MKLTCLMIVAVLFLTAWTFVTA). The propeptide occupies 23 to 50 (VPDSSNALENLYLKAHHEMNNPEDSELN). Intrachain disulfides connect Cys53–Cys67, Cys60–Cys71, and Cys66–Cys75.

The protein belongs to the conotoxin O1 superfamily. Expressed by the venom duct.

Its subcellular location is the secreted. Omega-conotoxins act at presynaptic membranes, they bind and block voltage-gated calcium channels (Cav). The chain is Omega-conotoxin-like Ai6.3 from Conus ammiralis (Admiral cone).